A 152-amino-acid polypeptide reads, in one-letter code: Transcriptional regulator MraZ (152 aa).

SpoVT-AbrB domains follow at residues 5–52 and 81–124; these read INAI…TAAQ and ATDV…NKEL.

Belongs to the MraZ family. Forms oligomers.

The protein localises to the cytoplasm. It is found in the nucleoid. In Legionella pneumophila (strain Paris), this protein is Transcriptional regulator MraZ.